A 546-amino-acid polypeptide reads, in one-letter code: Chaperonin GroEL 1 (546 aa).

ATP contacts are provided by residues 30–33 (TLGP), K51, 87–91 (DGTTT), G415, 479–481 (NAA), and D495. The disordered stretch occupies residues 526–546 (KEDAPMPGGMPGGMGGMGMDM). The segment covering 534 to 546 (GMPGGMGGMGMDM) has biased composition (gly residues).

The protein belongs to the chaperonin (HSP60) family. Forms a cylinder of 14 subunits composed of two heptameric rings stacked back-to-back. Interacts with the co-chaperonin GroES.

It localises to the cytoplasm. The catalysed reaction is ATP + H2O + a folded polypeptide = ADP + phosphate + an unfolded polypeptide.. Its function is as follows. Together with its co-chaperonin GroES, plays an essential role in assisting protein folding. The GroEL-GroES system forms a nano-cage that allows encapsulation of the non-native substrate proteins and provides a physical environment optimized to promote and accelerate protein folding. The chain is Chaperonin GroEL 1 from Burkholderia cenocepacia (strain HI2424).